Consider the following 406-residue polypeptide: Succinylornithine transaminase (406 aa).

Lys-252 is subject to N6-(pyridoxal phosphate)lysine.

It belongs to the class-III pyridoxal-phosphate-dependent aminotransferase family. AstC subfamily. The cofactor is pyridoxal 5'-phosphate.

It catalyses the reaction N(2)-succinyl-L-ornithine + 2-oxoglutarate = N-succinyl-L-glutamate 5-semialdehyde + L-glutamate. It participates in amino-acid degradation; L-arginine degradation via AST pathway; L-glutamate and succinate from L-arginine: step 3/5. Catalyzes the transamination of N(2)-succinylornithine and alpha-ketoglutarate into N(2)-succinylglutamate semialdehyde and glutamate. Can also act as an acetylornithine aminotransferase. In Escherichia coli (strain SMS-3-5 / SECEC), this protein is Succinylornithine transaminase.